The primary structure comprises 316 residues: Olfactory receptor 56B2 (316 aa).

The Extracellular segment spans residues Met-1–His-32. N-linked (GlcNAc...) asparagine glycosylation occurs at Asn-10. A helical membrane pass occupies residues Trp-33–Leu-53. Topologically, residues Ile-54–Ala-61 are cytoplasmic. Residues Leu-62–Thr-82 form a helical membrane-spanning segment. Residues Thr-83 to Ala-106 are Extracellular-facing. Cys-104 and Cys-196 form a disulfide bridge. The helical transmembrane segment at Gln-107–Ile-127 threads the bilayer. Over Asp-128–Ser-146 the chain is Cytoplasmic. A helical transmembrane segment spans residues Phe-147–Pro-167. Residues Leu-168 to Ser-203 lie on the Extracellular side of the membrane. A helical transmembrane segment spans residues Ile-204–Ser-224. The Cytoplasmic segment spans residues Tyr-225–Ala-244. A helical membrane pass occupies residues Leu-245–Ile-265. The Extracellular segment spans residues Ser-266–Pro-279. Residues Val-280–Leu-300 traverse the membrane as a helical segment. At Lys-301–Glu-316 the chain is on the cytoplasmic side.

Belongs to the G-protein coupled receptor 1 family.

It is found in the cell membrane. Functionally, odorant receptor. This is Olfactory receptor 56B2 from Homo sapiens (Human).